Consider the following 491-residue polypeptide: Beta-galactosidase (491 aa).

The active-site Proton donor is the Glu-209. The active-site Nucleophile is the Glu-389.

It belongs to the glycosyl hydrolase 1 family.

The catalysed reaction is Hydrolysis of terminal non-reducing beta-D-galactose residues in beta-D-galactosides.. In Sulfolobus acidocaldarius (strain ATCC 33909 / DSM 639 / JCM 8929 / NBRC 15157 / NCIMB 11770), this protein is Beta-galactosidase (bgaS).